The chain runs to 440 residues: Streptokinase G (440 aa).

A signal peptide spans 1 to 26 (MKNYLSFGMFALLFALTFGTVNSVQA).

In terms of biological role, this protein is not a protease, but it activates plasminogen by complexing with it. As a potential virulence factor, it is thought to prevent the formation of effective fibrin barriers around the site of infection, thereby contributing to the invasiveness of the cells. This chain is Streptokinase G (skg), found in Streptococcus sp. (strain 19909).